Here is a 63-residue protein sequence, read N- to C-terminus: Large ribosomal subunit protein bL28 (63 aa).

This sequence belongs to the bacterial ribosomal protein bL28 family.

This is Large ribosomal subunit protein bL28 from Alkaliphilus oremlandii (strain OhILAs) (Clostridium oremlandii (strain OhILAs)).